The following is a 540-amino-acid chain: Phenylalanine--tRNA ligase beta subunit (540 aa).

The 77-residue stretch at 266 to 342 (LRPEKRTVSV…IAYGYDKIET (77 aa)) folds into the B5 domain. Mg(2+) contacts are provided by aspartate 320, aspartate 326, glutamate 329, and aspartate 330.

The protein belongs to the phenylalanyl-tRNA synthetase beta subunit family. Type 2 subfamily. In terms of assembly, tetramer of two alpha and two beta subunits. It depends on Mg(2+) as a cofactor.

The protein localises to the cytoplasm. The catalysed reaction is tRNA(Phe) + L-phenylalanine + ATP = L-phenylalanyl-tRNA(Phe) + AMP + diphosphate + H(+). The protein is Phenylalanine--tRNA ligase beta subunit of Methanocorpusculum labreanum (strain ATCC 43576 / DSM 4855 / Z).